The following is a 494-amino-acid chain: NADH-quinone oxidoreductase subunit N (494 aa).

14 consecutive transmembrane segments (helical) span residues 9–29, 36–56, 73–93, 107–127, 131–151, 166–186, 209–229, 241–261, 278–298, 304–324, 339–359, 382–402, 416–436, and 469–489; these read VIPEIFLAAATCAILLIDLFL, LTYVLSLATLVVCAVLSLSDF, PMSNLLKFCTYIAVGLTLVYS, LGGEFYILSLFTVLGQMVMMS, FLIIYLGLEIMSLSLYALVAF, FVLGALASGFLLYGISMLYGA, LIFGLVFVVAGLAFKLGAVPF, PTAVTLMLGGAPKLAAFAITI, MLTILSVLSMAIGNITAIMQT, LAYSTISQVGFILLGLLSGVV, MFYVITYVLTTLGMFGVIMLL, FAFVTLLLMFSLAGVPPVVGF, GQIWLAVVAVLFSLIGAFYYL, and ALLALGLVPGPLMTACAAAII.

This sequence belongs to the complex I subunit 2 family. As to quaternary structure, NDH-1 is composed of 14 different subunits. Subunits NuoA, H, J, K, L, M, N constitute the membrane sector of the complex.

The protein resides in the cell inner membrane. The enzyme catalyses a quinone + NADH + 5 H(+)(in) = a quinol + NAD(+) + 4 H(+)(out). In terms of biological role, NDH-1 shuttles electrons from NADH, via FMN and iron-sulfur (Fe-S) centers, to quinones in the respiratory chain. The immediate electron acceptor for the enzyme in this species is believed to be ubiquinone. Couples the redox reaction to proton translocation (for every two electrons transferred, four hydrogen ions are translocated across the cytoplasmic membrane), and thus conserves the redox energy in a proton gradient. This chain is NADH-quinone oxidoreductase subunit N, found in Herminiimonas arsenicoxydans.